Reading from the N-terminus, the 247-residue chain is Adenosylcobinamide-GDP ribazoletransferase (247 aa).

The next 5 helical transmembrane spans lie at 34–54 (IITFPLIGLLLGAISGLVFMV), 57–77 (AWCGAPLAALFSVLVLALMTG), 113–133 (GGLALIFVVLAKILVLSELAL), 138–158 (ILASLAAACAVSRGTAALLMY), and 194–214 (VLLLGMHGVAAMVVTMVAIFI).

Belongs to the CobS family. Requires Mg(2+) as cofactor.

It localises to the cell inner membrane. It carries out the reaction alpha-ribazole + adenosylcob(III)inamide-GDP = adenosylcob(III)alamin + GMP + H(+). It catalyses the reaction alpha-ribazole 5'-phosphate + adenosylcob(III)inamide-GDP = adenosylcob(III)alamin 5'-phosphate + GMP + H(+). The protein operates within cofactor biosynthesis; adenosylcobalamin biosynthesis; adenosylcobalamin from cob(II)yrinate a,c-diamide: step 7/7. In terms of biological role, joins adenosylcobinamide-GDP and alpha-ribazole to generate adenosylcobalamin (Ado-cobalamin). Also synthesizes adenosylcobalamin 5'-phosphate from adenosylcobinamide-GDP and alpha-ribazole 5'-phosphate. The protein is Adenosylcobinamide-GDP ribazoletransferase of Shigella flexneri serotype 5b (strain 8401).